A 205-amino-acid chain; its full sequence is GTP cyclohydrolase-2 (205 aa).

49–53 (RVHSE) contributes to the GTP binding site. Residues cysteine 54, cysteine 65, and cysteine 67 each coordinate Zn(2+). GTP is bound by residues glutamine 70, 92–94 (EGR), and threonine 114. The active-site Proton acceptor is the aspartate 126. Arginine 128 (nucleophile) is an active-site residue. GTP-binding residues include threonine 149 and lysine 154.

This sequence belongs to the GTP cyclohydrolase II family. It depends on Zn(2+) as a cofactor.

It carries out the reaction GTP + 4 H2O = 2,5-diamino-6-hydroxy-4-(5-phosphoribosylamino)-pyrimidine + formate + 2 phosphate + 3 H(+). It participates in cofactor biosynthesis; riboflavin biosynthesis; 5-amino-6-(D-ribitylamino)uracil from GTP: step 1/4. Its function is as follows. Catalyzes the conversion of GTP to 2,5-diamino-6-ribosylamino-4(3H)-pyrimidinone 5'-phosphate (DARP), formate and pyrophosphate. This is GTP cyclohydrolase-2 from Pseudomonas fluorescens (strain SBW25).